Reading from the N-terminus, the 310-residue chain is Nodulation protein D 2 (310 aa).

The 58-residue stretch at 6–63 (LDLNLLVALDALMTERKLTAAARRVKLSQPAMSAAIARLRTYFGDELFSMQGRELIPT) folds into the HTH lysR-type domain. Residues 23-42 (LTAAARRVKLSQPAMSAAIA) constitute a DNA-binding region (H-T-H motif).

This sequence belongs to the LysR transcriptional regulatory family.

NodD regulates the expression of the nodABCFE genes which encode other nodulation proteins. NodD is also a negative regulator of its own expression. Binds flavonoids as inducers. In Rhizobium meliloti (strain 1021) (Ensifer meliloti), this protein is Nodulation protein D 2 (nodD2).